A 288-amino-acid polypeptide reads, in one-letter code: Acetyl-coenzyme A carboxylase carboxyl transferase subunit beta (288 aa).

In terms of domain architecture, CoA carboxyltransferase N-terminal spans 30 to 288 (IMTKCPKCKK…KLHQEVKKDA (259 aa)). C34, C37, C53, and C56 together coordinate Zn(2+). The segment at 34–56 (CPKCKKIMYTKELNENLNVCFNC) adopts a C4-type zinc-finger fold.

This sequence belongs to the AccD/PCCB family. As to quaternary structure, acetyl-CoA carboxylase is a heterohexamer composed of biotin carboxyl carrier protein (AccB), biotin carboxylase (AccC) and two subunits each of ACCase subunit alpha (AccA) and ACCase subunit beta (AccD). Requires Zn(2+) as cofactor.

It localises to the cytoplasm. It carries out the reaction N(6)-carboxybiotinyl-L-lysyl-[protein] + acetyl-CoA = N(6)-biotinyl-L-lysyl-[protein] + malonyl-CoA. It functions in the pathway lipid metabolism; malonyl-CoA biosynthesis; malonyl-CoA from acetyl-CoA: step 1/1. Component of the acetyl coenzyme A carboxylase (ACC) complex. Biotin carboxylase (BC) catalyzes the carboxylation of biotin on its carrier protein (BCCP) and then the CO(2) group is transferred by the transcarboxylase to acetyl-CoA to form malonyl-CoA. This chain is Acetyl-coenzyme A carboxylase carboxyl transferase subunit beta, found in Staphylococcus haemolyticus (strain JCSC1435).